We begin with the raw amino-acid sequence, 517 residues long: Endoglycoceramidase (517 aa).

Residues 1-17 (MISVALIILFLAKVISG) form the signal peptide. Asn99 carries an N-linked (GlcNAc...) asparagine glycan. Glu230 serves as the catalytic Proton donor. Asn298, Asn380, and Asn393 each carry an N-linked (GlcNAc...) asparagine glycan.

Belongs to the glycosyl hydrolase 5 (cellulase A) family. As to expression, expressed uniformly in digestive cells, tentacles and peduncle regions suggesting expression in the endoderm throughout the whole body (at protein level).

The protein resides in the secreted. It catalyses the reaction an oligoglycosyl-(1-&gt;4)-beta-D-glucosyl-(1&lt;-&gt;1)-ceramide + H2O = an oligoglycosyl-(1-&gt;4)-D-glucose + an N-acyl-sphingoid base. With respect to regulation, cu(2+), zinc, manganese, calcium, magnesium and EDTA have no significant effects on enzyme activity. Enzyme requires presence of detergents such as Triton X-100 and Lubrol PX for the hydrolysis of glycosphingolipids. Taurodeoxycholate strongly inhibits the enzyme activity. In terms of biological role, hydrolysis of the glycosidic linkage between oligosaccharides and ceramides of glycosphingolipids, optimal substrates appear to be the glycosphingolipids with a gangliotetraose structure. In Hydra vulgaris (Hydra), this protein is Endoglycoceramidase.